A 206-amino-acid chain; its full sequence is Ras-related protein Ral-A (206 aa).

21-28 (GSGGVGKS) serves as a coordination point for GTP. The short motif at 43–51 (YEPTKADSY) is the Effector region element. GTP-binding positions include 68 to 72 (DTAGQ) and 127 to 130 (NKSD). Serine 194 is modified (phosphoserine). At cysteine 203 the chain carries Cysteine methyl ester. Cysteine 203 is lipidated: S-geranylgeranyl cysteine. A propeptide spans 204–206 (CIL) (removed in mature form).

The protein belongs to the small GTPase superfamily. Ras family. Interacts (via effector domain) with RALBP1; during mitosis, recruits RALBP1 to the mitochondrion where it promotes DNM1L phosphorylation and mitochondrial fission. Interacts with EXOC2/Sec5 and EXOC8/Exo84; binding to EXOC2 and EXOC8 is mutually exclusive. Interacts with Clostridium exoenzyme C3. Interacts with RALGPS1. Interacts with LPAR1 and LPAR2. Interacts with GRK2 in response to LPAR1 activation. RALA and GRK2 binding to LPAR1 is mutually exclusive. Interacts with CDC42. Prenylation is essential for membrane localization. In terms of processing, phosphorylated. Phosphorylation at Ser-194 by AURKA/Aurora kinase A, during mitosis, induces RALA localization to the mitochondrion where it regulates mitochondrial fission.

Its subcellular location is the cell membrane. The protein localises to the cleavage furrow. It localises to the midbody. It is found in the midbody ring. The protein resides in the mitochondrion. The catalysed reaction is GTP + H2O = GDP + phosphate + H(+). Alternates between an inactive form bound to GDP and an active form bound to GTP. Activated by a guanine nucleotide-exchange factor (GEF) and inactivated by a GTPase-activating protein (GAP). In terms of biological role, multifunctional GTPase involved in a variety of cellular processes including gene expression, cell migration, cell proliferation, oncogenic transformation and membrane trafficking. Accomplishes its multiple functions by interacting with distinct downstream effectors. Acts as a GTP sensor for GTP-dependent exocytosis of dense core vesicles. Key regulator of LPAR1 signaling and competes with GRK2 for binding to LPAR1 thus affecting the signaling properties of the receptor. Required for anchorage-independent proliferation of transformed cells. The RALA-exocyst complex regulates integrin-dependent membrane raft exocytosis and growth signaling. During mitosis, supports the stabilization and elongation of the intracellular bridge between dividing cells. Cooperates with EXOC2 to recruit other components of the exocyst to the early midbody. During mitosis, also controls mitochondrial fission by recruiting to the mitochondrion RALBP1, which mediates the phosphorylation and activation of DNM1L by the mitotic kinase cyclin B-CDK1. The sequence is that of Ras-related protein Ral-A (Rala) from Mus musculus (Mouse).